Reading from the N-terminus, the 152-residue chain is Small ribosomal subunit protein uS15 (152 aa).

Residues 1–20 are disordered; the sequence is MNKRRANGSSHSTRPVRTGS.

The protein belongs to the universal ribosomal protein uS15 family. Part of the 30S ribosomal subunit.

The chain is Small ribosomal subunit protein uS15 from Metallosphaera sedula (strain ATCC 51363 / DSM 5348 / JCM 9185 / NBRC 15509 / TH2).